The following is a 385-amino-acid chain: Cytochrome b (385 aa).

4 consecutive transmembrane segments (helical) span residues 32 to 52, 76 to 98, 113 to 133, and 179 to 199; these read FGSL…TLAM, WFIR…AHMG, PWSI…MGYV, and FFAL…LHLI. Residues histidine 82 and histidine 96 each coordinate heme b. Residues histidine 183 and histidine 197 each coordinate heme b. Residue histidine 202 coordinates a ubiquinone. The next 4 membrane-spanning stretches (helical) occupy residues 225 to 245, 289 to 309, 321 to 341, and 348 to 368; these read YSFK…LFVF, LGGV…PIVD, ISKL…VLGQ, and FIVL…ILLP.

Belongs to the cytochrome b family. As to quaternary structure, fungal cytochrome b-c1 complex contains 10 subunits; 3 respiratory subunits, 2 core proteins and 5 low-molecular weight proteins. Cytochrome b-c1 complex is a homodimer. Requires heme b as cofactor.

Its subcellular location is the mitochondrion inner membrane. In terms of biological role, component of the ubiquinol-cytochrome c reductase complex (complex III or cytochrome b-c1 complex) that is part of the mitochondrial respiratory chain. The b-c1 complex mediates electron transfer from ubiquinol to cytochrome c. Contributes to the generation of a proton gradient across the mitochondrial membrane that is then used for ATP synthesis. In Yarrowia lipolytica (strain CLIB 122 / E 150) (Yeast), this protein is Cytochrome b (COB).